Here is a 394-residue protein sequence, read N- to C-terminus: MAARRRPAAGVGARDALAVLALALCTPGVGGGALEWYSAMVSIEYVDPQSNLTVWSVSESGRFGESSLREERQGLVGVPRAPAPAEGCAPDTRFVAPGALGNAPWVALVARGGCTFKDKVLAAARRNASAVVVYNLESNGNATEPMSHAGTGNIVVIMISYPKGREIFDLVQKGIPVKMRIEIGTRHMQEFISGQSVVFVAIAFITMMIISLAWLIFYYIQRFLYTGSQFGSQNHRKETKKVIGQLPLHTVKHGEKGIDVDAENCAVCIENFKVKDVIRILPCKHIFHRICIDPWLLDHRTCPMCKLDVIKALGYWGDPEDTQELPTPEAAPGRVSVGNLSVTSQDEERSESNLPSSSSSESGPHRPCLKEDAGEDTALLGAGRSEPQHGGSIC.

An N-terminal signal peptide occupies residues 1–31 (MAARRRPAAGVGARDALAVLALALCTPGVGG). N-linked (GlcNAc...) asparagine glycans are attached at residues Asn51 and Asn141. Residues 66–171 (SSLREERQGL…PKGREIFDLV (106 aa)) enclose the PA domain. Residues 197-217 (VVFVAIAFITMMIISLAWLIF) form a helical membrane-spanning segment. The RING-type; atypical zinc finger occupies 265-306 (CAVCIENFKVKDVIRILPCKHIFHRICIDPWLLDHRTCPMCK). Positions 321-394 (DTQELPTPEA…SEPQHGGSIC (74 aa)) are disordered. Thr327 carries the phosphothreonine modification. Asn339 carries an N-linked (GlcNAc...) asparagine glycan. A phosphoserine mark is found at Ser341 and Ser344. Positions 352–362 (SNLPSSSSSES) are enriched in low complexity.

The protein localises to the membrane. The enzyme catalyses S-ubiquitinyl-[E2 ubiquitin-conjugating enzyme]-L-cysteine + [acceptor protein]-L-lysine = [E2 ubiquitin-conjugating enzyme]-L-cysteine + N(6)-ubiquitinyl-[acceptor protein]-L-lysine.. The protein operates within protein modification; protein ubiquitination. Functionally, E3 ubiquitin-protein ligase. Ubiquitinates BRAF, inducing its proteasomal degradation. The polypeptide is E3 ubiquitin-protein ligase RNF149 (Rnf149) (Mus musculus (Mouse)).